The chain runs to 1909 residues: Plexin-B3 (1909 aa).

The first 44 residues, 1–44 (MCHAAQETPLLHHFMAPVMARWPPFGLCLLLLLLSPPPLPLTGA), serve as a signal peptide directing secretion. A Sema domain is found at 45-471 (HRFSAPNTTL…TAHQVDRIPV (427 aa)). At 45–1255 (HRFSAPNTTL…PLSAFPVEAQ (1211 aa)) the chain is on the extracellular side. An N-linked (GlcNAc...) asparagine glycan is attached at N51. Intrachain disulfides connect C98–C107 and C132–C140. Residue N231 is glycosylated (N-linked (GlcNAc...) asparagine). 8 cysteine pairs are disulfide-bonded: C267–C370, C283–C315, C333–C357, C474–C491, C480–C525, C483–C500, C494–C506, and C562–C580. Residues 473–526 (ACPQFPDCASCLQAQDPLCGWCVLQGRCTRKGQCGRAGQLNQWLWSYEEDSHCL) enclose the PSI 1 domain. N-linked (GlcNAc...) asparagine glycosylation is present at N615. PSI domains lie at 620 to 682 (DCSA…GACP) and 787 to 833 (DCAM…LLCP). N802, N900, N957, N1101, and N1218 each carry an N-linked (GlcNAc...) asparagine glycan. IPT/TIG domains are found at residues 835–925 (PSID…FTYQ), 927–1012 (PVLL…FRYT), 1015–1145 (PQLV…FLYQ), and 1159–1244 (ARPY…YEAE). The chain crosses the membrane as a helical span at residues 1256–1276 (AGVGMGAAVLIAAVLLLTLMY). The Cytoplasmic portion of the chain corresponds to 1277 to 1909 (RHKSKQALRD…ALVENKVTDL (633 aa)).

This sequence belongs to the plexin family. As to quaternary structure, interacts (via cytoplasmic domain) with RAC1 and ARHGDIA. Binds MET and MST1R. Interacts (via cytoplasmic domain) with FSCN1. Interacts with RIT2/RIN. May form homodimers (via Sema domain). In terms of tissue distribution, expression detected in Purkinje and granular cells in cerebellum, and in brain neocortex but not in corpus callosum. Expressed in glioma cells and embryonic kidney cells (at protein level). Expressed in brain, liver, pancreas and placenta, with weak expression detected also in lung and kidney. Expressed in several glioma cell lines.

The protein resides in the cell membrane. Functionally, receptor for SEMA5A that plays a role in axon guidance, invasive growth and cell migration. Stimulates neurite outgrowth and mediates Ca(2+)/Mg(2+)-dependent cell aggregation. In glioma cells, SEMA5A stimulation of PLXNB3 results in the disassembly of F-actin stress fibers, disruption of focal adhesions and cellular collapse as well as inhibition of cell migration and invasion through ARHGDIA-mediated inactivation of RAC1. This is Plexin-B3 (PLXNB3) from Homo sapiens (Human).